The primary structure comprises 386 residues: MTSLFRRSSSGSGGGGTAGARGGGGGTAAPQELNNSRPARQVRRLEFNQAMDDFKTMFPNMDYDIIECVLRANSGAVDATIDQLLQMNLEGGGSSGGVYEDSSDSEDSIPPEILERTLEPDSSDEEPPPVYSPPAYHMHVFDRPYPLAPPTPPPRIDALGSGAPTSQRRYRNWNPPLLGNLPDDFLRILPQQLDSIQGNAGGPKPGSGEGCPPAMAGPGPGDQESRWKQYLEDERIALFLQNEEFMKELQRNRDFLLALERDRLKYESQKSKSSSVAVGNDFGFSSPVPGTGDANPAVSEDALFRDKLKHMGKSTRRKLFELARAFSEKTKMRKSKRKHLLKHQSLGAAASTANLLDDVEGHACDEDFRGRRQEAPKVEEGLREGQ.

Residues 1-10 show a composition bias toward low complexity; the sequence is MTSLFRRSSS. The segment at 1–40 is disordered; the sequence is MTSLFRRSSSGSGGGGTAGARGGGGGTAAPQELNNSRPAR. The segment covering 11 to 27 has biased composition (gly residues); that stretch reads GSGGGGTAGARGGGGGT. The 44-residue stretch at 46 to 89 folds into the CUE domain; it reads EFNQAMDDFKTMFPNMDYDIIECVLRANSGAVDATIDQLLQMNL. Disordered stretches follow at residues 147–172, 195–225, and 367–386; these read LAPP…RYRN, SIQG…DQES, and DFRG…REGQ. Over residues 199–209 the composition is skewed to gly residues; sequence NAGGPKPGSGE.

This Homo sapiens (Human) protein is CUE domain-containing protein 1 (CUEDC1).